The primary structure comprises 601 residues: Elongation factor 4 (601 aa).

One can recognise a tr-type G domain in the interval 7-189 (KNIRNFSIVA…AIVTRLPPPM (183 aa)). GTP-binding positions include 19 to 24 (DHGKST) and 136 to 139 (NKVD).

Belongs to the TRAFAC class translation factor GTPase superfamily. Classic translation factor GTPase family. LepA subfamily.

The protein resides in the cell inner membrane. It catalyses the reaction GTP + H2O = GDP + phosphate + H(+). In terms of biological role, required for accurate and efficient protein synthesis under certain stress conditions. May act as a fidelity factor of the translation reaction, by catalyzing a one-codon backward translocation of tRNAs on improperly translocated ribosomes. Back-translocation proceeds from a post-translocation (POST) complex to a pre-translocation (PRE) complex, thus giving elongation factor G a second chance to translocate the tRNAs correctly. Binds to ribosomes in a GTP-dependent manner. The polypeptide is Elongation factor 4 (Xanthobacter autotrophicus (strain ATCC BAA-1158 / Py2)).